The sequence spans 349 residues: UPF0324 inner membrane protein YeiH (349 aa).

Residues 1–12 lie on the Periplasmic side of the membrane; it reads MTELTLQNHCRT. The helical transmembrane segment at 13–35 threads the bilayer; the sequence is MWHFIPGLALSAVITGVALWGGA. Residues 36–38 are Cytoplasmic-facing; sequence IPA. The chain crosses the membrane as a helical span at residues 39–61; that stretch reads VAGAGFSALTLAILLGMVIGNTI. Over 62-99 the chain is Periplasmic; it reads YPQIWKQCDGGVLFAKQHLLRLGIILYGFRLTFSQIAD. The helical transmembrane segment at 100 to 122 threads the bilayer; the sequence is VGISGIVIDVLTLSSTFMLACFL. Residues 123 to 131 are Cytoplasmic-facing; that stretch reads GQKVFGLDR. The helical transmembrane segment at 132-151 threads the bilayer; sequence HTSWLIGAGSSICGAAAVLA. Residues 152–162 are Periplasmic-facing; that stretch reads TEPVVKAEASK. A helical transmembrane segment spans residues 163–185; that stretch reads VTVAVATVVIFGTIAIFLYPAMY. Over 186–261 the chain is Cytoplasmic; it reads PLLAHWFSPE…SPATGAEKSK (76 aa). Residues 262 to 284 form a helical membrane-spanning segment; it reads ITIPWFAIFFIVVAIFNSFHLLP. Topologically, residues 285–290 are periplasmic; that stretch reads KAVVDM. A helical membrane pass occupies residues 291-313; the sequence is LVTLDTVLLAMAMAALGLTTHVS. Over 314-322 the chain is Cytoplasmic; it reads ALKKAGAKP. A helical transmembrane segment spans residues 323–345; the sequence is LLMALALFAWLIIGGGAINVLIH. Topologically, residues 346 to 349 are periplasmic; sequence SLIA.

Belongs to the UPF0324 family.

Its subcellular location is the cell inner membrane. The sequence is that of UPF0324 inner membrane protein YeiH (yeiH) from Salmonella typhimurium (strain LT2 / SGSC1412 / ATCC 700720).